A 643-amino-acid chain; its full sequence is Protein tramtrack, beta isoform (643 aa).

In terms of domain architecture, BTB spans 33 to 98; sequence TDVTLAVEGQ…MYRGEVSVDQ (66 aa). 2 disordered regions span residues 118-148 and 171-300; these read EVNDDKPSPAAAAAGAGATGSESTATTPQLQ and ANAG…GLDT. Lys-123 is covalently cross-linked (Glycyl lysine isopeptide (Lys-Gly) (interchain with G-Cter in ubiquitin)). Over residues 125 to 145 the composition is skewed to low complexity; the sequence is SPAAAAAGAGATGSESTATTP. Over residues 176 to 187 the composition is skewed to polar residues; sequence TPTLPVQPSLLS. Positions 192-201 are enriched in basic residues; that stretch reads PKRKRGRPRK. Lys-201 is covalently cross-linked (Glycyl lysine isopeptide (Lys-Gly) (interchain with G-Cter in ubiquitin)). The segment covering 254-285 has biased composition (basic and acidic residues); sequence HTDDLNESRDSLPSKRSKNSKDHRVVSHHEDN. Glycyl lysine isopeptide (Lys-Gly) (interchain with G-Cter in ubiquitin) cross-links involve residues Lys-355, Lys-397, Lys-418, Lys-457, Lys-478, and Lys-480. C2H2-type zinc fingers lie at residues 508-531 and 538-561; these read YRCKVCSRVYTHISNFCRHYVTSH and YPCPFCFKEFTRKDNMTAHVKIIH. Lys-545 participates in a covalent cross-link: Glycyl lysine isopeptide (Lys-Gly) (interchain with G-Cter in ubiquitin). The tract at residues 584–643 is disordered; it reads GVSGASTPPPPDLSGQNSNQSLPATSNALSTSSSSSTSSSSGSLGPLTTSAPPAPAAAAQ. Residues 604 to 643 are compositionally biased toward low complexity; it reads SLPATSNALSTSSSSSTSSSSGSLGPLTTSAPPAPAAAAQ.

In terms of assembly, can form homodimers. Interacts with Trl in vivo via the BTB domain. Interacts with phyl. Interacts with Usp47. Post-translationally, polyubiquitinated by sina. Polyubiquitin linkage is mainly through 'Lys-48', but linkage through 'Lys-63' also occurs. Deubiquitination by Usp47 leads to its stabilization.

It is found in the nucleus. Its function is as follows. Binds to a number of sites in the transcriptional regulatory region of ftz. Isoform beta is required to repress inappropriate segmentation gene transcription and repress genes incompatible with development of photoreceptor cell fates. Probable repressor of the transcription of the segmentation genes ftz, eve, h, odd, run, and en. Inhibits Trl-dependent activation of eve. May bind to the region AGGGC/TGG. Degradation of ttk is directed by binding of sinah or sina, via the adapter molecule phyl which binds to the BTB domain of ttk. A second method of degradation exists that is phyl-independent, this is mediated by recognition of motifs in the C-terminus of ttk. This chain is Protein tramtrack, beta isoform (ttk), found in Drosophila melanogaster (Fruit fly).